Reading from the N-terminus, the 143-residue chain is Large ribosomal subunit protein uL16 (143 aa).

This sequence belongs to the universal ribosomal protein uL16 family. In terms of assembly, part of the 50S ribosomal subunit.

Functionally, binds 23S rRNA and is also seen to make contacts with the A and possibly P site tRNAs. The polypeptide is Large ribosomal subunit protein uL16 (Thermosynechococcus vestitus (strain NIES-2133 / IAM M-273 / BP-1)).